Reading from the N-terminus, the 317-residue chain is R-phycoerythrin gamma chain, chloroplastic (317 aa).

The transit peptide at 1 to 40 directs the protein to the chloroplast; sequence MASPAFAVNGMFTPVKLSGSFTASMPVDSKPAASATGVRM. Phycourobilin contacts are provided by Cys94 and Cys133. Residue Cys210 coordinates (2R,3E)-phycoerythrobilin. Residue Cys297 coordinates phycourobilin.

As to quaternary structure, heteromer of 1 alpha, 1 beta and 2 gamma chains. Post-translationally, contains four covalently linked bilin chromophores.

The protein resides in the plastid. Its subcellular location is the chloroplast thylakoid membrane. Its function is as follows. Critical for the incorporation of phycoerythrin in the phycobilisome complex. The protein is R-phycoerythrin gamma chain, chloroplastic of Aglaothamnion neglectum (Red alga).